Reading from the N-terminus, the 183-residue chain is Calcium-binding protein M (183 aa).

Residue Gly-2 is the site of N-myristoyl glycine attachment. 4 EF-hand domains span residues 25–60 (EEVANIYGEFKKFDKDGNGSFDRKEFVLFFKSKLPN), 61–96 (YPEDNLNKLFDAFDSDKSNTIDFKELTVALSIIGKG), 97–132 (SAEDKLKVLFDIYDKDKSGILEKKEVDEMIALMKNV), and 142–177 (DIELFIVKLFEKIDKDKNNLISREEFLTEGARSPSL). Residues Asp-74, Asp-76, Ser-78, Thr-80, Glu-85, Asp-110, Asp-112, Ser-114, Glu-121, Asp-155, Asp-157, Asn-159, and Glu-166 each coordinate Ca(2+).

This sequence belongs to the recoverin family.

In Dictyostelium discoideum (Social amoeba), this protein is Calcium-binding protein M (cbpM).